Consider the following 510-residue polypeptide: ATP synthase subunit alpha (510 aa).

169–176 (GDRQTGKT) lines the ATP pocket.

This sequence belongs to the ATPase alpha/beta chains family. As to quaternary structure, F-type ATPases have 2 components, CF(1) - the catalytic core - and CF(0) - the membrane proton channel. CF(1) has five subunits: alpha(3), beta(3), gamma(1), delta(1), epsilon(1). CF(0) has four main subunits: a(1), b(1), b'(1) and c(9-12).

It localises to the cell inner membrane. It catalyses the reaction ATP + H2O + 4 H(+)(in) = ADP + phosphate + 5 H(+)(out). In terms of biological role, produces ATP from ADP in the presence of a proton gradient across the membrane. The alpha chain is a regulatory subunit. This Rhodopseudomonas palustris (strain BisB5) protein is ATP synthase subunit alpha.